The following is a 102-amino-acid chain: NADH-quinone oxidoreductase subunit K 1 (102 aa).

A run of 3 helical transmembrane segments spans residues 3 to 23 (TLTT…LGIL), 29 to 49 (VGML…FMAF), and 62 to 82 (IIAL…LSII).

This sequence belongs to the complex I subunit 4L family. NDH-1 is composed of 14 different subunits. Subunits NuoA, H, J, K, L, M, N constitute the membrane sector of the complex.

The protein localises to the cell inner membrane. The enzyme catalyses a quinone + NADH + 5 H(+)(in) = a quinol + NAD(+) + 4 H(+)(out). Its function is as follows. NDH-1 shuttles electrons from NADH, via FMN and iron-sulfur (Fe-S) centers, to quinones in the respiratory chain. The immediate electron acceptor for the enzyme in this species is believed to be ubiquinone. Couples the redox reaction to proton translocation (for every two electrons transferred, four hydrogen ions are translocated across the cytoplasmic membrane), and thus conserves the redox energy in a proton gradient. The polypeptide is NADH-quinone oxidoreductase subunit K 1 (Syntrophobacter fumaroxidans (strain DSM 10017 / MPOB)).